The primary structure comprises 335 residues: Homeobox protein Hox-A1 (335 aa).

The tract at residues 61–80 (IGSPHHHHHHHHRHPQPATY) is disordered. Over residues 64–75 (PHHHHHHHHRHP) the composition is skewed to basic residues. The segment at 75 to 203 (PQPATYQTSG…PASETSSPAQ (129 aa)) is interaction with OGT. Positions 204-209 (TFDWMK) match the Antp-type hexapeptide motif. Residues 229 to 288 (PNAVRTNFTTKQLTELEKEFHFNKYLTRARRVEIAASLQLNETQVKIWFQNRRMKQKKRE) constitute a DNA-binding region (homeobox). The segment at 281 to 335 (RMKQKKREKEGLLPISPATPPGNDEKAEESSEKSSSSPCVPSPGSSTSDTLTTSH) is disordered. Basic and acidic residues predominate over residues 303 to 312 (NDEKAEESSE). A compositionally biased stretch (low complexity) spans 313–328 (KSSSSPCVPSPGSSTS).

The protein belongs to the Antp homeobox family. Labial subfamily. In terms of assembly, interacts with OGT (via TPR repeats domain); the interaction takes place mainly in the nucleus. Forms a DNA-binding heterodimer with transcription factor PBX1.

The protein localises to the nucleus. Its function is as follows. Sequence-specific transcription factor. Regulates multiple developmental processes including brainstem, inner and outer ear, abducens nerve and cardiovascular development and morphogenesis as well as cognition and behavior. Also part of a developmental regulatory system that provides cells with specific positional identities on the anterior-posterior axis. Acts on the anterior body structures. Seems to act in the maintenance and/or generation of hindbrain segments. Activates transcription in the presence of PBX1A and PKNOX1. This is Homeobox protein Hox-A1 (HOXA1) from Homo sapiens (Human).